The chain runs to 212 residues: Probable GTP-binding protein EngB (212 aa).

The EngB-type G domain maps to 38 to 210 (SLPEIAFVGK…KASLAKCIKP (173 aa)). GTP-binding positions include 46-53 (GKSNVGKS), 73-77 (GRTRQ), 91-94 (DLPG), 158-161 (TKSD), and 189-191 (VSN). Mg(2+) is bound by residues S53 and T75.

It belongs to the TRAFAC class TrmE-Era-EngA-EngB-Septin-like GTPase superfamily. EngB GTPase family. Mg(2+) serves as cofactor.

Functionally, necessary for normal cell division and for the maintenance of normal septation. The sequence is that of Probable GTP-binding protein EngB from Rickettsia africae (strain ESF-5).